A 574-amino-acid polypeptide reads, in one-letter code: Iron hydrogenase 1 (574 aa).

The region spanning 1–78 (MKTIIINGVQ…GMIINTNSDA (78 aa)) is the 2Fe-2S ferredoxin-type domain. The [2Fe-2S] cluster site is built by Cys34, Cys46, Cys49, and Cys62. The 40-residue stretch at 78 to 117 (AVNEKIKSRISQLLDIHEFKCGPCNRRENCEFLKLVIKYK) folds into the 4Fe-4S His(Cys)3-ligated-type domain. 16 residues coordinate [4Fe-4S] cluster: His94, Cys98, Cys101, Cys107, Cys147, Cys150, Cys153, Cys157, Cys190, Cys193, Cys196, Cys200, Cys300, Cys355, Cys499, and Cys503. 2 consecutive 4Fe-4S ferredoxin-type domains span residues 138 to 167 (KSLT…YAMK) and 181 to 210 (DEKC…EKSH). Cys503 provides a ligand contact to Fe(2+).

In terms of assembly, monomer. [2Fe-2S] cluster serves as cofactor. [4Fe-4S] cluster is required as a cofactor. Requires Fe(2+) as cofactor.

It carries out the reaction H2 + 2 oxidized [2Fe-2S]-[ferredoxin] = 2 reduced [2Fe-2S]-[ferredoxin] + 2 H(+). The protein is Iron hydrogenase 1 of Clostridium pasteurianum.